The chain runs to 420 residues: Beta-arrestin-2 (420 aa).

The residue at position 48 (Tyr-48) is a Phosphotyrosine. Pro-176 and Pro-181 each carry hydroxyproline; by PHD2. Residues 240 to 409 are interaction with TRAF6; the sequence is ADICLFSTAQ…EDFARLRLKG (170 aa). At Ser-360 the chain carries Phosphoserine. Residues 374 to 420 form an interaction with AP2B1 region; the sequence is PETDAPVDTNLIEFETNYATDDDIVFEDFARLRLKGLKDEDYDDQFC. Thr-393 is modified (phosphothreonine). Positions 396–406 match the [DE]-X(1,2)-F-X-X-[FL]-X-X-X-R motif motif; sequence DIVFEDFARLR.

The protein belongs to the arrestin family. In terms of assembly, homooligomer; the self-association is mediated by InsP6-binding. Heterooligomer with ARRB1; the association is mediated by InsP6-binding. Interacts with ADRB2 and CHRM2. Interacts with PDE4A. Interacts with PDE4D. Interacts with MAPK10, MAPK1 and MAPK3. Interacts with DRD2. Interacts with FSHR. Interacts with CLTC. Interacts with HTR2C. Interacts with CRR5. Interacts with CXCR4. Interacts with SRC. Interacts with DUSP16; the interaction is interrupted by stimulation of AGTR1 and activation of MAPK10. Interacts with CHUK; the interaction is enhanced stimulation of ADRB2. Interacts with RELA. Interacts with MDM2; the interaction is enhanced by activation of GPCRs. Interacts with SLC9A5. Interacts with TRAF6. Interacts with IGF1R. Interacts with ENG. Interacts with KIR2DL1, KIR2DL3 and KIR2DL4. Interacts with LDLR. Interacts with AP2B1. Interacts with C5AR1. Interacts with RAF1. Interacts with MAP2K1. Interacts with MAPK1. Interacts with MAPK10; the interaction enhances MAPK10 activation by MAP3K5. Interacts with MAP2K4; the interaction is enhanced by presence of MAP3K5 and MAPK10. Interacts with MAP3K5. Interacts with AKT1. Interacts with IKBKB and MAP3K14. Interacts with SMO (activated). Interacts with GSK3A and GSK3B. Associates with protein phosphatase 2A (PP2A). Interacts with CXCR4; the interaction is dependent on C-terminal phosphorylation of CXCR4 and allows activation of MAPK1 and MAPK3. Interacts with GPR143. Interacts with HCK and CXCR1 (phosphorylated). Interacts with ACKR3 and ACKR4. Interacts with ARRDC1; the interaction is direct. Interacts with GPR61, GPR62 and GPR135. Interacts (via NACHT and LRR domains) with NLRP3; this interaction is direct and inducible by omega-3 polyunsaturated fatty acids (PUFAs). Interacts with FFAR4 (via C-terminus); this interaction is stimulated by long-chain fatty acids (LCFAs). Interacts with GPR35. Interacts with GPR84. Interacts with TIGIT; this interaction inhibits the NF-kappa-B pathway. Interacts with TGFBR3. Phosphorylated at Thr-382 in the cytoplasm; probably dephosphorylated at the plasma membrane. The phosphorylation does not regulate internalization and recycling of ADRB2, interaction with clathrin or AP2B1. Post-translationally, the ubiquitination status appears to regulate the formation and trafficking of beta-arrestin-GPCR complexes and signaling. Ubiquitination appears to occur GPCR-specific. Ubiquitinated by MDM2; the ubiquitination is required for rapid internalization of ADRB2. Deubiquitinated by USP33; the deubiquitination leads to a dissociation of the beta-arrestin-GPCR complex. Stimulation of a class A GPCR, such as ADRB2, induces transient ubiquitination and subsequently promotes association with USP33. Stimulation of a class B GPCR promotes a sustained ubiquitination. Deubiquitinated by USP20; allowing USP20 to deubiquitinate TRAF6 leading to inhibition of NF-kappa-B signaling. In terms of processing, hydroxylation by PHD2 modulates the rate of internalization by slowing down recruitment to the plasma membrane and inhibiting subsequent co-internalization with class A receptors. In terms of tissue distribution, found in a variety of tissues. The short isoform is the most abundant form in all tissues.

Its subcellular location is the cytoplasm. The protein resides in the nucleus. It is found in the cell membrane. The protein localises to the membrane. It localises to the clathrin-coated pit. Its subcellular location is the cytoplasmic vesicle. Its function is as follows. Functions in regulating agonist-mediated G-protein coupled receptor (GPCR) signaling by mediating both receptor desensitization and resensitization processes. During homologous desensitization, beta-arrestins bind to the GPRK-phosphorylated receptor and sterically preclude its coupling to the cognate G-protein; the binding appears to require additional receptor determinants exposed only in the active receptor conformation. The beta-arrestins target many receptors for internalization by acting as endocytic adapters (CLASPs, clathrin-associated sorting proteins) and recruiting the GPRCs to the adapter protein 2 complex 2 (AP-2) in clathrin-coated pits (CCPs). However, the extent of beta-arrestin involvement appears to vary significantly depending on the receptor, agonist and cell type. Internalized arrestin-receptor complexes traffic to intracellular endosomes, where they remain uncoupled from G-proteins. Two different modes of arrestin-mediated internalization occur. Class A receptors, like ADRB2, OPRM1, ENDRA, D1AR and ADRA1B dissociate from beta-arrestin at or near the plasma membrane and undergo rapid recycling. Class B receptors, like AVPR2, AGTR1, NTSR1, TRHR and TACR1 internalize as a complex with arrestin and traffic with it to endosomal vesicles, presumably as desensitized receptors, for extended periods of time. Receptor resensitization then requires that receptor-bound arrestin is removed so that the receptor can be dephosphorylated and returned to the plasma membrane. Mediates endocytosis of CCR7 following ligation of CCL19 but not CCL21. Involved in internalization of P2RY1, P2RY4, P2RY6 and P2RY11 and ATP-stimulated internalization of P2RY2. Involved in phosphorylation-dependent internalization of OPRD1 and subsequent recycling or degradation. Involved in ubiquitination of IGF1R. Beta-arrestins function as multivalent adapter proteins that can switch the GPCR from a G-protein signaling mode that transmits short-lived signals from the plasma membrane via small molecule second messengers and ion channels to a beta-arrestin signaling mode that transmits a distinct set of signals that are initiated as the receptor internalizes and transits the intracellular compartment. Acts as a signaling scaffold for MAPK pathways such as MAPK1/3 (ERK1/2) and MAPK10 (JNK3). ERK1/2 and JNK3 activated by the beta-arrestin scaffold are largely excluded from the nucleus and confined to cytoplasmic locations such as endocytic vesicles, also called beta-arrestin signalosomes. Acts as a signaling scaffold for the AKT1 pathway. GPCRs for which the beta-arrestin-mediated signaling relies on both ARRB1 and ARRB2 (codependent regulation) include ADRB2, F2RL1 and PTH1R. For some GPCRs the beta-arrestin-mediated signaling relies on either ARRB1 or ARRB2 and is inhibited by the other respective beta-arrestin form (reciprocal regulation). Increases ERK1/2 signaling in AGTR1- and AVPR2-mediated activation (reciprocal regulation). Involved in CCR7-mediated ERK1/2 signaling involving ligand CCL19. Is involved in type-1A angiotensin II receptor/AGTR1-mediated ERK activity. Is involved in type-1A angiotensin II receptor/AGTR1-mediated MAPK10 activity. Is involved in dopamine-stimulated AKT1 activity in the striatum by disrupting the association of AKT1 with its negative regulator PP2A. Involved in AGTR1-mediated chemotaxis. Appears to function as signaling scaffold involved in regulation of MIP-1-beta-stimulated CCR5-dependent chemotaxis. Involved in attenuation of NF-kappa-B-dependent transcription in response to GPCR or cytokine stimulation by interacting with and stabilizing CHUK. Suppresses UV-induced NF-kappa-B-dependent activation by interacting with CHUK. The function is promoted by stimulation of ADRB2 and dephosphorylation of ARRB2. Involved in p53/TP53-mediated apoptosis by regulating MDM2 and reducing the MDM2-mediated degradation of p53/TP53. May serve as nuclear messenger for GPCRs. Upon stimulation of OR1D2, may be involved in regulation of gene expression during the early processes of fertilization. Also involved in regulation of receptors other than GPCRs. Involved in endocytosis of TGFBR2 and TGFBR3 and down-regulates TGF-beta signaling such as NF-kappa-B activation. Involved in endocytosis of low-density lipoprotein receptor/LDLR. Involved in endocytosis of smoothened homolog/Smo, which also requires GRK2. Involved in endocytosis of SLC9A5. Involved in endocytosis of ENG and subsequent TGF-beta-mediated ERK activation and migration of epithelial cells. Involved in Toll-like receptor and IL-1 receptor signaling through the interaction with TRAF6 which prevents TRAF6 autoubiquitination and oligomerization required for activation of NF-kappa-B and JUN. Involved in insulin resistance by acting as insulin-induced signaling scaffold for SRC, AKT1 and INSR. Involved in regulation of inhibitory signaling of natural killer cells by recruiting PTPN6 and PTPN11 to KIR2DL1. Involved in IL8-mediated granule release in neutrophils. Involved in the internalization of the atypical chemokine receptor ACKR3. Acts as an adapter protein coupling FFAR4 receptor to specific downstream signaling pathways, as well as mediating receptor endocytosis. During the activation step of NLRP3 inflammasome, directly associates with NLRP3 leading to inhibition of pro-inflammatory cytokine release and inhibition of inflammation. This is Beta-arrestin-2 (ARRB2) from Bos taurus (Bovine).